The chain runs to 139 residues: Aspartate 1-decarboxylase (139 aa).

Serine 25 serves as the catalytic Schiff-base intermediate with substrate; via pyruvic acid. Serine 25 is subject to Pyruvic acid (Ser). Threonine 57 provides a ligand contact to substrate. The active-site Proton donor is the tyrosine 58. 73-75 (GAA) serves as a coordination point for substrate. Residues 116-139 (ELGEDPAHAPAGSGLKDPRHPEGE) form a disordered region.

It belongs to the PanD family. Heterooctamer of four alpha and four beta subunits. Requires pyruvate as cofactor. Is synthesized initially as an inactive proenzyme, which is activated by self-cleavage at a specific serine bond to produce a beta-subunit with a hydroxyl group at its C-terminus and an alpha-subunit with a pyruvoyl group at its N-terminus.

The protein localises to the cytoplasm. The enzyme catalyses L-aspartate + H(+) = beta-alanine + CO2. The protein operates within cofactor biosynthesis; (R)-pantothenate biosynthesis; beta-alanine from L-aspartate: step 1/1. Functionally, catalyzes the pyruvoyl-dependent decarboxylation of aspartate to produce beta-alanine. The polypeptide is Aspartate 1-decarboxylase (Corynebacterium urealyticum (strain ATCC 43042 / DSM 7109)).